A 364-amino-acid polypeptide reads, in one-letter code: MLLRRLEMLNFRNFARQAVEPGLYFNVLSGRNAQGKTNILESIYLACTGRSFRTAREKELIKREKEFSSIRCLFETRGREVEVKVTLVPGRKRIEVNGVLKSGHPFGWPGVVLFTPDDLVMIKGSPAERRRFLDYDLGPFHPHYAHCLDRYNRVLSQRNALLREAKEKRTTGGPLEVWDEQLCRYGSRLLFLRVSLLKKFFPAIRALHRELTEGAENIEISYLSSLKIGEECGEDEIYERFSGELRLVRDEEIARMQTLVGPHRDDLHIKVDGHDARVYCSQGQQRTIVLTLKVFLIEQWRSETGEYPILLLDDVLFELDDNRREALMCRLGGLVQTFLTCTRVNFDIEGFKAKVFTVSGGEVT.

30-37 serves as a coordination point for ATP; sequence GRNAQGKT.

Belongs to the RecF family.

It is found in the cytoplasm. The RecF protein is involved in DNA metabolism; it is required for DNA replication and normal SOS inducibility. RecF binds preferentially to single-stranded, linear DNA. It also seems to bind ATP. The chain is DNA replication and repair protein RecF from Pelotomaculum thermopropionicum (strain DSM 13744 / JCM 10971 / SI).